We begin with the raw amino-acid sequence, 412 residues long: Glucose-1-phosphate adenylyltransferase (412 aa).

Residues Tyr-98, Gly-163, 178–179 (EK), and Ser-189 contribute to the alpha-D-glucose 1-phosphate site.

Belongs to the bacterial/plant glucose-1-phosphate adenylyltransferase family. Homotetramer.

It carries out the reaction alpha-D-glucose 1-phosphate + ATP + H(+) = ADP-alpha-D-glucose + diphosphate. Its pathway is glycan biosynthesis; glycogen biosynthesis. Involved in the biosynthesis of ADP-glucose, a building block required for the elongation reactions to produce glycogen. Catalyzes the reaction between ATP and alpha-D-glucose 1-phosphate (G1P) to produce pyrophosphate and ADP-Glc. In Thermosipho africanus (strain TCF52B), this protein is Glucose-1-phosphate adenylyltransferase.